The sequence spans 130 residues: Glutamate-rich protein 4 (130 aa).

The segment covering 91–104 has biased composition (acidic residues); the sequence is EEEEESSKEEEEDQ. The segment at 91–130 is disordered; the sequence is EEEEESSKEEEEDQEPQRKQEEEHLEACPAPHPPDFEMMI. The span at 105–116 shows a compositional bias: basic and acidic residues; the sequence is EPQRKQEEEHLE.

This is Glutamate-rich protein 4 (ERICH4) from Homo sapiens (Human).